The sequence spans 438 residues: Enolase (438 aa).

Residue Q174 coordinates (2R)-2-phosphoglycerate. E216 acts as the Proton donor in catalysis. D253, E297, and D324 together coordinate Mg(2+). (2R)-2-phosphoglycerate-binding residues include K349, R378, S379, and K400. K349 serves as the catalytic Proton acceptor.

Belongs to the enolase family. In terms of assembly, component of the RNA degradosome, a multiprotein complex involved in RNA processing and mRNA degradation. Requires Mg(2+) as cofactor.

It localises to the cytoplasm. It is found in the secreted. Its subcellular location is the cell surface. The enzyme catalyses (2R)-2-phosphoglycerate = phosphoenolpyruvate + H2O. It functions in the pathway carbohydrate degradation; glycolysis; pyruvate from D-glyceraldehyde 3-phosphate: step 4/5. In terms of biological role, catalyzes the reversible conversion of 2-phosphoglycerate (2-PG) into phosphoenolpyruvate (PEP). It is essential for the degradation of carbohydrates via glycolysis. The sequence is that of Enolase from Psychrobacter arcticus (strain DSM 17307 / VKM B-2377 / 273-4).